The chain runs to 287 residues: Inorganic pyrophosphatase (287 aa).

Diphosphate is bound at residue Arg79. The Mg(2+) site is built by Asp116, Asp121, and Asp153. Over residues 244 to 258 (NSTLGNSDSVDSSKL) the composition is skewed to polar residues. The tract at residues 244-269 (NSTLGNSDSVDSSKLASIPRGENLPP) is disordered.

It belongs to the PPase family. Mg(2+) is required as a cofactor.

The protein resides in the cytoplasm. The enzyme catalyses diphosphate + H2O = 2 phosphate + H(+). Involved in osmoadaptation. The protein is Inorganic pyrophosphatase (ipp1) of Emericella nidulans (strain FGSC A4 / ATCC 38163 / CBS 112.46 / NRRL 194 / M139) (Aspergillus nidulans).